Here is a 596-residue protein sequence, read N- to C-terminus: Trehalase (596 aa).

Positions 1–23 (MFKLPTISLLLVSWSCLVALSQA) are cleaved as a signal peptide. Residues arginine 193, 200–201 (WD), asparagine 237, and 246–248 (RSQ) each bind substrate. 2 N-linked (GlcNAc...) asparagine glycosylation sites follow: asparagine 288 and asparagine 293. The disordered stretch occupies residues 303–323 (SSGPRPESYREDVETGEEFPT). Substrate contacts are provided by residues 307-309 (RPE) and glycine 341. Aspartate 343 acts as the Proton donor/acceptor in catalysis. 3 N-linked (GlcNAc...) asparagine glycosylation sites follow: asparagine 359, asparagine 451, and asparagine 516. The active-site Proton donor/acceptor is the glutamate 541. Glutamate 556 lines the substrate pocket.

This sequence belongs to the glycosyl hydrolase 37 family. As to expression, in the adult brain predominantly expressed in glial cells (at protein level).

The catalysed reaction is alpha,alpha-trehalose + H2O = alpha-D-glucose + beta-D-glucose. Enzyme that cleaves trehalose to produce 2 glucose molecules that can be used by the glycolytic pathway. Glycolysis is essential in glial cells but not in neurons; neurons rely on the citric acid cycle for their energy needs, and on lactate and alanine secreted into the hemolymph by glial cells to fuel it. This Drosophila melanogaster (Fruit fly) protein is Trehalase.